Consider the following 501-residue polypeptide: Cytochrome P450 90A4 (501 aa).

Residues 2–22 (AAAALLLLAAAAAAVVVAMAL) form a helical membrane-spanning segment. Residue Cys-446 participates in heme binding.

Belongs to the cytochrome P450 family. Heme serves as cofactor.

It is found in the membrane. It participates in plant hormone biosynthesis; brassinosteroid biosynthesis. Functionally, catalyzes the C23-alpha-hydroxylation step in brassinosteroid biosynthesis. Converts 6-deoxocathasterone to 6-deoxoteasterone in the late C6-oxidation pathway and cathasterone to teasterone (TE) in the early C6-oxidation pathway of brassinolide (BL) biosynthesis. In Oryza sativa subsp. indica (Rice), this protein is Cytochrome P450 90A4.